The primary structure comprises 69 residues: U-scoloptoxin(21)-Sm2a (69 aa).

The N-terminal stretch at methionine 1–proline 21 is a signal peptide. The disordered stretch occupies residues alanine 46 to proline 69. A compositionally biased stretch (basic and acidic residues) spans isoleucine 60–proline 69.

Belongs to the scoloptoxin-21 family. As to expression, expressed by the venom gland.

The protein resides in the secreted. In Scolopendra morsitans (Tanzanian blue ringleg centipede), this protein is U-scoloptoxin(21)-Sm2a.